Here is a 598-residue protein sequence, read N- to C-terminus: Cytochrome P450 monooxygenase phmB (598 aa).

A helical membrane pass occupies residues 107–127 (VAAKIAALLFVAGLFWAVSVL). N-linked (GlcNAc...) asparagine glycosylation is found at asparagine 171, asparagine 428, and asparagine 494. Heme is bound at residue cysteine 542. N-linked (GlcNAc...) asparagine glycans are attached at residues asparagine 549 and asparagine 581.

The protein belongs to the cytochrome P450 family. The cofactor is heme.

The protein localises to the membrane. It functions in the pathway mycotoxin biosynthesis. Its function is as follows. Cytochrome P450 monooxygenase; part of the gene cluster that mediates the biosynthesis of the mycotoxins phomacins, leucine-derived cytochalasans with potent actin polymerization-inhibitory activities and monocot-specific antigerminative activities. The first step in the pathway is catalyzed by the hybrid PKS-NRPS phmA, assisted by the enoyl reductase phmE, that are responsible for fusion of the leucine precursor and the polyketide backbone to produce a 2-pyrrolidone intermediate. The polyketide synthase module (PKS) of phmA is responsible for the synthesis of the polyketide backbone and the downstream nonribosomal peptide synthetase (NRPS) amidates the carboxyl end of the polyketide with the leucine precursor. Because phmA lacks a designated enoylreductase (ER) domain, the required activity is provided the enoyl reductase phmE. Reduction by the hydrolyase phmG, followed by dehydration and intra-molecular Diels-Alder cyclization by the Diels-Alderase phmD then yield the required isoindolone-fused macrocycle. A number of oxidative steps catalyzed by the tailoring cytochrome P450 monooxygenase phmB, the FAD-linked oxidoreductase phmC and the short-chain dehydrogenase/reductase phmF, are further required to afford the final products, phomacin D and phomacin E. The chain is Cytochrome P450 monooxygenase phmB from Phaeosphaeria nodorum (strain SN15 / ATCC MYA-4574 / FGSC 10173) (Glume blotch fungus).